A 461-amino-acid polypeptide reads, in one-letter code: V-type ATP synthase beta chain 1 (461 aa).

This sequence belongs to the ATPase alpha/beta chains family.

Produces ATP from ADP in the presence of a proton gradient across the membrane. The V-type beta chain is a regulatory subunit. The sequence is that of V-type ATP synthase beta chain 1 from Clostridium tetani (strain Massachusetts / E88).